The sequence spans 523 residues: GMP synthase [glutamine-hydrolyzing] (523 aa).

Positions 8 to 205 (KILILDFGSQ…VVNICGCETK (198 aa)) constitute a Glutamine amidotransferase type-1 domain. Cys85 acts as the Nucleophile in catalysis. Residues His179 and Glu181 contribute to the active site. The region spanning 206–398 (WTAENIIEDA…LGLPAEMINR (193 aa)) is the GMPS ATP-PPase domain. 233-239 (SGGVDSS) lines the ATP pocket.

As to quaternary structure, homodimer.

The enzyme catalyses XMP + L-glutamine + ATP + H2O = GMP + L-glutamate + AMP + diphosphate + 2 H(+). It participates in purine metabolism; GMP biosynthesis; GMP from XMP (L-Gln route): step 1/1. Catalyzes the synthesis of GMP from XMP. This chain is GMP synthase [glutamine-hydrolyzing], found in Haemophilus influenzae (strain PittGG).